The sequence spans 378 residues: Erythronate-4-phosphate dehydrogenase (378 aa).

Substrate is bound by residues Ser45 and Thr66. NAD(+)-binding residues include Asp146 and Thr175. Residue Arg208 is part of the active site. Asp232 serves as a coordination point for NAD(+). Glu237 is an active-site residue. His254 serves as the catalytic Proton donor. NAD(+) is bound at residue Gly257. Residue Tyr258 participates in substrate binding.

The protein belongs to the D-isomer specific 2-hydroxyacid dehydrogenase family. PdxB subfamily. Homodimer.

It localises to the cytoplasm. The catalysed reaction is 4-phospho-D-erythronate + NAD(+) = (R)-3-hydroxy-2-oxo-4-phosphooxybutanoate + NADH + H(+). It functions in the pathway cofactor biosynthesis; pyridoxine 5'-phosphate biosynthesis; pyridoxine 5'-phosphate from D-erythrose 4-phosphate: step 2/5. In terms of biological role, catalyzes the oxidation of erythronate-4-phosphate to 3-hydroxy-2-oxo-4-phosphonooxybutanoate. This is Erythronate-4-phosphate dehydrogenase from Escherichia coli O7:K1 (strain IAI39 / ExPEC).